Here is a 178-residue protein sequence, read N- to C-terminus: Large ribosomal subunit protein uL6 (178 aa).

This sequence belongs to the universal ribosomal protein uL6 family. As to quaternary structure, part of the 50S ribosomal subunit.

In terms of biological role, this protein binds to the 23S rRNA, and is important in its secondary structure. It is located near the subunit interface in the base of the L7/L12 stalk, and near the tRNA binding site of the peptidyltransferase center. This is Large ribosomal subunit protein uL6 from Streptococcus uberis (strain ATCC BAA-854 / 0140J).